The primary structure comprises 305 residues: Nuclear egress protein 1 (305 aa).

Residues 1–11 (MDRERPRKTRE) are compositionally biased toward basic and acidic residues. A disordered region spans residues 1–24 (MDRERPRKTREPASPGSVLSKRSK). A CCCH-type zinc finger spans residues 104-230 (CLVLSPLGHA…FALFKTDDLH (127 aa)).

It belongs to the herpesviridae NEC1 protein family. In terms of assembly, forms a heterohexameric complex with NEC2. Interacts with capsid vertex specific component 2/CVC2; this interaction directs the capsid to the host inner nuclear membrane to initiate budding. Post-translationally, phosphorylated at serine residues in the N-terminus. This phosphorylation regulates the localization within the inner nuclear membrane.

It localises to the host nucleus inner membrane. Plays an essential role in virion nuclear egress, the first step of virion release from infected cell. Within the host nucleus, NEC1 interacts with the newly formed capsid through the vertexes and directs it to the inner nuclear membrane by associating with NEC2. Induces the budding of the capsid at the inner nuclear membrane as well as its envelopment into the perinuclear space. There, the NEC1/NEC2 complex promotes the fusion of the enveloped capsid with the outer nuclear membrane and the subsequent release of the viral capsid into the cytoplasm where it will reach the secondary budding sites in the host Golgi or trans-Golgi network. This chain is Nuclear egress protein 1, found in Equus caballus (Horse).